The primary structure comprises 712 residues: MWVCLQLPVFLASVTLFEVAASDTIAQAASTTTISDAVSKVKIQVNKAFLDSRTRLKTTLSSEAPTTQQLSEYFKHAKGQTRTAIRNGQVWEESFKRLRRDTTLTNVTDPSLDLTALSWEVGCGAPVPLVKCDENSPYRTITGDCNNRRSPALGAANRALARWLPAEYEDGLALPFGWTQRKTRNGFRVPLAREVSNKIVGYLDEEGVLDQNRSLLFMQWGQIVDHDLDFAPETELGSNEHSKTQCEEYCIQGDNCFPIMFPKNDPKLKTQGKCMPFFRAGFVCPTPPYQSLAREQINAVTSFLDASLVYGSEPSLASRLRNLSSPLGLMAVNQEAWDHGLAYLPFNNKKPSPCEFINTTARVPCFLAGDFRASEQILLATAHTLLLREHNRLARELKKLNPHWNGEKLYQEARKILGAFIQIITFRDYLPIVLGSEMQKWIPPYQGYNNSVDPRISNVFTFAFRFGHMEVPSTVSRLDENYQPWGPEAELPLHTLFFNTWRIIKDGGIDPLTRGLLAKKSKLMNQDKMVTSELRNKLFQPTHKIHGFDLAAINLQRCRDHGMPGYNSWRGFCGLSQPKTLKGLQTVLKNKILAKKLMDLYKTPDNIDIWIGGNAEPMVERGRVGPLLACLLGRQFQQIRDGDRFWWENPGVFTEKQRDSLQKFSFSRLICDNTHITKVPLHAFQANNYPHDFVDCSTVDKLDLSPWASREN.

Positions 1–22 are cleaved as a signal peptide; sequence MWVCLQLPVFLASVTLFEVAAS. Residues 23–100 constitute a propeptide that is removed on maturation; that stretch reads DTIAQAASTT…WEESFKRLRR (78 aa). Residue asparagine 106 is glycosylated (N-linked (GlcNAc...) (complex) asparagine; alternate). Asparagine 106 carries N-linked (GlcNAc...) (hybrid) asparagine; alternate glycosylation. Cystine bridges form between cysteine 123–cysteine 284, cysteine 132–cysteine 145, cysteine 246–cysteine 256, and cysteine 250–cysteine 274. Asparagine 212 carries an N-linked (GlcNAc...) (complex) asparagine; alternate glycan. Asparagine 212 carries an N-linked (GlcNAc...) (high mannose) asparagine; alternate glycan. Aspartate 225 contacts heme b. The Proton acceptor role is filled by histidine 226. Position 227 (aspartate 227) interacts with Ca(2+). Ca(2+) is bound by residues threonine 301, phenylalanine 303, aspartate 305, and serine 307. Serine 315 is modified (phosphoserine). Asparagine 322 is a glycosylation site (N-linked (GlcNAc...) (high mannose) asparagine). Cysteine 354 and cysteine 365 form a disulfide bridge. N-linked (GlcNAc...) asparagine glycosylation is present at asparagine 358. Position 375 (glutamate 375) interacts with heme b. N-linked (GlcNAc...) (complex) asparagine; alternate glycosylation is present at asparagine 449. The N-linked (GlcNAc...) (hybrid) asparagine; alternate glycan is linked to asparagine 449. A glycan (N-linked (GlcNAc...) (high mannose) asparagine; alternate) is linked at asparagine 449. Position 468 (histidine 468) interacts with heme b. Tyrosine 482 is subject to 3'-nitrotyrosine. Disulfide bonds link cysteine 573/cysteine 630 and cysteine 671/cysteine 696.

It belongs to the peroxidase family. XPO subfamily. Ca(2+) serves as cofactor. Heme b is required as a cofactor. Mammary gland; milk.

It is found in the secreted. The protein resides in the cytoplasm. It carries out the reaction 2 a phenolic donor + H2O2 = 2 a phenolic radical donor + 2 H2O. It catalyses the reaction thiocyanate + H2O2 + H(+) = hypothiocyanous acid + H2O. The catalysed reaction is iodide + H2O2 = hypoiodite + H2O. Heme-containing oxidoreductase which catalyzes the conversion of thiocyanate (SCN(-)) into antimicrobial agent hypothiocyanous acid (OSCN(-)) in the presence of hydrogen peroxide (H2O2). Also involved in the conversion of iodide (I(-)) into hypoiodite (IO(-)) in the presence of H2O2. Responsible for the inactivation of a wide range of micro-organisms and hence, important component of defense mechanism. Shows antibacterial properties against E.coli, K.pneumoniae, P.aeruginosa, S.sonnei, S.saphrophyticus, S.epidermidis and S.dysenteriae. May protect the udder from infection and may promote growth in newborns. May be implicated in airway host defense against infection. May contribute to maintaining an appropriate H2O2 cellular level, therefore protecting cells from H2O2-caused injuries and inflammation. The sequence is that of Lactoperoxidase from Bubalus bubalis (Domestic water buffalo).